The chain runs to 385 residues: Lipid-A-disaccharide synthase 2 (385 aa).

The protein belongs to the LpxB family.

The enzyme catalyses a lipid X + a UDP-2-N,3-O-bis[(3R)-3-hydroxyacyl]-alpha-D-glucosamine = a lipid A disaccharide + UDP + H(+). Its pathway is bacterial outer membrane biogenesis; LPS lipid A biosynthesis. Its function is as follows. Condensation of UDP-2,3-diacylglucosamine and 2,3-diacylglucosamine-1-phosphate to form lipid A disaccharide, a precursor of lipid A, a phosphorylated glycolipid that anchors the lipopolysaccharide to the outer membrane of the cell. This is Lipid-A-disaccharide synthase 2 from Legionella pneumophila subsp. pneumophila (strain Philadelphia 1 / ATCC 33152 / DSM 7513).